Here is a 356-residue protein sequence, read N- to C-terminus: Metacaspase-1 (356 aa).

Positions 1 to 47 (MYSGRSGAPPPAHSPYPNSYNHGPPGHSAGHNVPPPPPTQPVQFGHG) are disordered. Active-site residues include His147 and Cys203.

The protein belongs to the peptidase C14B family.

Its function is as follows. Involved in cell death (apoptosis). The sequence is that of Metacaspase-1 (MCA1) from Ajellomyces capsulatus (strain NAm1 / WU24) (Darling's disease fungus).